Reading from the N-terminus, the 179-residue chain is Cell division protein ZapC (179 aa).

Belongs to the ZapC family. Interacts directly with FtsZ.

It localises to the cytoplasm. Its function is as follows. Contributes to the efficiency of the cell division process by stabilizing the polymeric form of the cell division protein FtsZ. Acts by promoting interactions between FtsZ protofilaments and suppressing the GTPase activity of FtsZ. This chain is Cell division protein ZapC, found in Tolumonas auensis (strain DSM 9187 / NBRC 110442 / TA 4).